The sequence spans 253 residues: Probable transcriptional regulatory protein Mlut_12910 (253 aa).

Belongs to the TACO1 family.

It is found in the cytoplasm. The chain is Probable transcriptional regulatory protein Mlut_12910 from Micrococcus luteus (strain ATCC 4698 / DSM 20030 / JCM 1464 / CCM 169 / CCUG 5858 / IAM 1056 / NBRC 3333 / NCIMB 9278 / NCTC 2665 / VKM Ac-2230) (Micrococcus lysodeikticus).